Reading from the N-terminus, the 196-residue chain is Nodulation protein A (196 aa).

The protein belongs to the NodA family.

It localises to the cytoplasm. N-acyltransferase required for nodulation. Acts in the production of a small, heat-stable compound (Nod) that stimulates mitosis in various plant protoplasts. This Mesorhizobium sp. (strain 7653R) protein is Nodulation protein A.